The sequence spans 842 residues: Elongation factor 2 (842 aa).

Residues 17-253 (TNVRNMSVIA…LWGDSYFNPK (237 aa)) form the tr-type G domain. Residues 26-33 (AHVDHGKS), 158-161 (NKVD), and 213-215 (SGL) each bind GTP. Histidine 699 carries the diphthamide modification.

This sequence belongs to the TRAFAC class translation factor GTPase superfamily. Classic translation factor GTPase family. EF-G/EF-2 subfamily.

The protein resides in the cytoplasm. The catalysed reaction is GTP + H2O = GDP + phosphate + H(+). Its function is as follows. Catalyzes the GTP-dependent ribosomal translocation step during translation elongation. During this step, the ribosome changes from the pre-translocational (PRE) to the post-translocational (POST) state as the newly formed A-site-bound peptidyl-tRNA and P-site-bound deacylated tRNA move to the P and E sites, respectively. Catalyzes the coordinated movement of the two tRNA molecules, the mRNA and conformational changes in the ribosome. The chain is Elongation factor 2 (EFT1) from Eremothecium gossypii (strain ATCC 10895 / CBS 109.51 / FGSC 9923 / NRRL Y-1056) (Yeast).